The primary structure comprises 227 residues: Cytochrome c oxidase subunit 2 (227 aa).

Topologically, residues 1-26 are mitochondrial intermembrane; sequence MATWSNLNLQNSSSPLMEQLIFFHDH. The chain crosses the membrane as a helical span at residues 27-48; sequence TLMILLMITVLVAYIMSMLFFN. The Mitochondrial matrix portion of the chain corresponds to 49–62; it reads LYTNRFLLEGQTIE. A helical membrane pass occupies residues 63-82; it reads IIWTILPAITLIFIALPSLR. Residues 83–227 lie on the Mitochondrial intermembrane side of the membrane; it reads LLYLLDESMD…FINWIKNYSS (145 aa). Cu cation is bound by residues His-160, Cys-195, Glu-197, Cys-199, His-203, and Met-206. Residue Glu-197 coordinates Mg(2+).

This sequence belongs to the cytochrome c oxidase subunit 2 family. As to quaternary structure, component of the cytochrome c oxidase (complex IV, CIV), a multisubunit enzyme composed of a catalytic core of 3 subunits and several supernumerary subunits. The complex exists as a monomer or a dimer and forms supercomplexes (SCs) in the inner mitochondrial membrane with ubiquinol-cytochrome c oxidoreductase (cytochrome b-c1 complex, complex III, CIII). Cu cation is required as a cofactor.

It localises to the mitochondrion inner membrane. It catalyses the reaction 4 Fe(II)-[cytochrome c] + O2 + 8 H(+)(in) = 4 Fe(III)-[cytochrome c] + 2 H2O + 4 H(+)(out). Functionally, component of the cytochrome c oxidase, the last enzyme in the mitochondrial electron transport chain which drives oxidative phosphorylation. The respiratory chain contains 3 multisubunit complexes succinate dehydrogenase (complex II, CII), ubiquinol-cytochrome c oxidoreductase (cytochrome b-c1 complex, complex III, CIII) and cytochrome c oxidase (complex IV, CIV), that cooperate to transfer electrons derived from NADH and succinate to molecular oxygen, creating an electrochemical gradient over the inner membrane that drives transmembrane transport and the ATP synthase. Cytochrome c oxidase is the component of the respiratory chain that catalyzes the reduction of oxygen to water. Electrons originating from reduced cytochrome c in the intermembrane space (IMS) are transferred via the dinuclear copper A center (CU(A)) of subunit 2 and heme A of subunit 1 to the active site in subunit 1, a binuclear center (BNC) formed by heme A3 and copper B (CU(B)). The BNC reduces molecular oxygen to 2 water molecules using 4 electrons from cytochrome c in the IMS and 4 protons from the mitochondrial matrix. The chain is Cytochrome c oxidase subunit 2 (COII) from Acheta domesticus (House cricket).